The sequence spans 46 residues: Defensin-like protein AX1 (46 aa).

4 cysteine pairs are disulfide-bonded: Cys3–Cys46, Cys14–Cys34, Cys20–Cys40, and Cys24–Cys42.

As to expression, leaves and flowers.

Its function is as follows. Strong inhibiting activity against C.beticola and other filamentous fungi. Little or no effect against bacteria. The polypeptide is Defensin-like protein AX1 (Beta vulgaris (Sugar beet)).